Consider the following 86-residue polypeptide: Putative membrane protein insertion efficiency factor (86 aa).

A disordered region spans residues 66–86 (FSKGGFDPVPPHDGVPGKKED).

This sequence belongs to the UPF0161 family.

It localises to the cell inner membrane. Could be involved in insertion of integral membrane proteins into the membrane. This Chlorobium luteolum (strain DSM 273 / BCRC 81028 / 2530) (Pelodictyon luteolum) protein is Putative membrane protein insertion efficiency factor.